The sequence spans 177 residues: MILSGKTISEKLTEKELEITPLTEEQIQPASVDLRLGPHFVTIDDSKEAVISFERPIRYREWTTSDETIVLPPHTFLLATTMETVKLPNHLTAFVEGRSSVGRLGLFIQNAGWVDPGFNGQITLELFNANRLPIELPIGRRICQLVFAEVTGEVAPYQGKYLFQKGATMSEIYKDAF.

DCTP-binding positions include 98 to 103 (RSSVGR), Asn110, 115 to 118 (DPGF), 123 to 125 (TLE), Gln144, 157 to 160 (YQGK), and Gln164. The active-site Proton donor/acceptor is the Glu125.

It belongs to the dCTP deaminase family. In terms of assembly, homotrimer. The cofactor is Mg(2+).

It catalyses the reaction dCTP + 2 H2O = dUMP + NH4(+) + diphosphate. The protein operates within pyrimidine metabolism; dUMP biosynthesis; dUMP from dCTP: step 1/1. Inhibited by dTTP. Bifunctional enzyme that catalyzes both the deamination of dCTP to dUTP and the hydrolysis of dUTP to dUMP without releasing the toxic dUTP intermediate. The protein is dCTP deaminase, dUMP-forming of Halalkalibacterium halodurans (strain ATCC BAA-125 / DSM 18197 / FERM 7344 / JCM 9153 / C-125) (Bacillus halodurans).